Reading from the N-terminus, the 309-residue chain is Glutaminase (309 aa).

The substrate site is built by Ser64, Asn114, Glu160, Asn167, Tyr191, Tyr243, and Val261.

This sequence belongs to the glutaminase family. As to quaternary structure, homotetramer.

The enzyme catalyses L-glutamine + H2O = L-glutamate + NH4(+). In Rhodopseudomonas palustris (strain BisB18), this protein is Glutaminase.